A 314-amino-acid chain; its full sequence is N-alpha-acetyltransferase 80 (314 aa).

Residues 90–243 enclose the N-acetyltransferase domain; sequence LEPVHCRPEL…TTVLRAFSKP (154 aa). Substrate is bound by residues Arg-113 and 118-121; that span reads RLHS. Acetyl-CoA is bound by residues 169 to 171, 177 to 182, and Gln-207; these read VVV and GRGFGR. The interval 260–295 is disordered; it reads VPRSSKGPPLPPPPPLPQSLTASPPPSPEPLPQSPL. Over residues 267–292 the composition is skewed to pro residues; the sequence is PPLPPPPPLPQSLTASPPPSPEPLPQ.

Belongs to the acetyltransferase family.

The protein resides in the cytoplasm. It localises to the cytosol. The catalysed reaction is N-terminal L-aspartyl-L-aspartyl-L-aspartyl-[protein] + acetyl-CoA = N-terminal N-acetyl-L-aspartyl-L-aspartyl-L-aspartyl-[protein] + CoA + H(+). It catalyses the reaction N-terminal L-glutamyl-L-glutamyl-L-glutamyl-[protein] + acetyl-CoA = N-terminal N-acetyl-L-glutamyl-L-glutamyl-L-glutamyl-[protein] + CoA + H(+). Its function is as follows. N-alpha-acetyltransferase that specifically mediates the acetylation of the acidic amino terminus of processed forms of beta- and gamma-actin (ACTB and ACTG, respectively). N-terminal acetylation of processed beta- and gamma-actin regulates actin filament depolymerization and elongation. In vivo, preferentially displays N-terminal acetyltransferase activity towards acid N-terminal sequences starting with Asp-Asp-Asp and Glu-Glu-Glu. In vitro, shows high activity towards Met-Asp-Glu-Leu and Met-Asp-Asp-Asp. May act as a tumor suppressor. This chain is N-alpha-acetyltransferase 80, found in Mus musculus (Mouse).